The following is a 490-amino-acid chain: CUGBP Elav-like family member 1 (490 aa).

2 RRM domains span residues 16-99 and 108-188; these read IKMF…PADS and RKLF…FADT. Residues 283-312 are disordered; it reads PSAGSALTTSSSPLSILTSSGSSPSSNNNS. One can recognise an RRM 3 domain in the interval 405–483; sequence ANLFIYHLPQ…KRLKVQLKRS (79 aa).

Belongs to the CELF/BRUNOL family. Oligomer. Oligomerization is required for RNA-binding and EDEN-dependent deadenylation. In terms of processing, phosphorylated during oocyte maturation and dephosphorylated following egg activation. Dephosphorylation is calcium dependent and correlates with the increase in the activity of EDEN-dependent deadenylation.

It is found in the nucleus. It localises to the cytoplasm. Its function is as follows. RNA-binding protein implicated in the regulation of several post-transcriptional events. May be involved in pre-mRNA alternative splicing, mRNA translation activation and stability. Mediates the rapid and sequence-specific cytoplasmic deadenylation of EDEN-containing maternal mRNAs following fertilization. Binds to AU-rich sequences (AREs) of jun mRNA. Binds to the embryonic deadenylation element (EDEN) motif localized in the 3'-UTR of maternal mRNAs. Binds to RNA containing several repeats of the consensus sequence 5'-UGU-3'. EDEN-dependent deadenylation is enhanced by the presence of an additional cis element composed of three AUU repeats. The sequence is that of CUGBP Elav-like family member 1 (celf1) from Xenopus tropicalis (Western clawed frog).